A 201-amino-acid chain; its full sequence is Large ribosomal subunit protein uL4 (201 aa).

The interval arginine 44–alanine 68 is disordered.

It belongs to the universal ribosomal protein uL4 family. In terms of assembly, part of the 50S ribosomal subunit.

Its function is as follows. One of the primary rRNA binding proteins, this protein initially binds near the 5'-end of the 23S rRNA. It is important during the early stages of 50S assembly. It makes multiple contacts with different domains of the 23S rRNA in the assembled 50S subunit and ribosome. In terms of biological role, forms part of the polypeptide exit tunnel. The chain is Large ribosomal subunit protein uL4 from Buchnera aphidicola subsp. Acyrthosiphon pisum (strain APS) (Acyrthosiphon pisum symbiotic bacterium).